The chain runs to 706 residues: Transcription factor 12 (706 aa).

The tract at residues 25–109 is disordered; it reads AMFSPPVNSG…TPFMNSNLIG (85 aa). 2 stretches are compositionally biased toward polar residues: residues 30 to 48 and 56 to 76; these read PVNS…QFSG and GTTS…SRGF. 3 positions are modified to phosphoserine: Ser47, Ser67, and Ser79. The segment covering 81–93 has biased composition (basic and acidic residues); that stretch reads HYSDHLNDSRLGT. Ser98 carries the phosphoserine modification. Lys110 participates in a covalent cross-link: Glycyl lysine isopeptide (Lys-Gly) (interchain with G-Cter in SUMO2). 2 positions are modified to phosphoserine: Ser116 and Ser124. Residues 119–140 form a leucine-zipper region; it reads LYSRDSGLSGCQSSLLRQDLGL. 2 disordered regions span residues 140 to 222 and 249 to 313; these read LGSP…SMFA and FGGI…ASHT. Residues 144–163 are compositionally biased toward polar residues; it reads AQLSSSGKPGTPYYSFSATS. A Glycyl lysine isopeptide (Lys-Gly) (interchain with G-Cter in SUMO2) cross-link involves residue Lys181. Residues 181 to 188 carry the Nuclear localization signal motif; that stretch reads KKVRKVPP. Residues 256 to 269 show a composition bias toward low complexity; that stretch reads STSHMSQSSSYGSL. The segment covering 282-306 has biased composition (polar residues); sequence VSPTDINTSLPPMSSFHRGSTSSSP. Position 313 is a phosphothreonine (Thr313). Residue Ser333 is modified to Phosphoserine. Disordered stretches follow at residues 349–392 and 520–604; these read PDHT…YENS and HKTP…ERRM. Over residues 352–363 the composition is skewed to low complexity; sequence TSSSFPSNPSTP. Composition is skewed to polar residues over residues 364–376 and 383–392; these read VGSP…TSQW and APSSPSYENS. Ser392 bears the Phosphoserine mark. Basic and acidic residues-rich tracts occupy residues 542–554 and 560–575; these read IKTE…ENLH and DDMK…DIKV. Lys543 is covalently cross-linked (Glycyl lysine isopeptide (Lys-Gly) (interchain with G-Cter in SUMO2)). Ser564 is subject to Phosphoserine. Residue Lys574 forms a Glycyl lysine isopeptide (Lys-Gly) (interchain with G-Cter in SUMO2) linkage. The residue at position 581 (Thr581) is a Phosphothreonine. Phosphoserine is present on residues Ser582 and Ser583. Residues 592 to 604 are compositionally biased toward basic and acidic residues; it reads PEQKIEREKERRM. The 54-residue stretch at 601–654 folds into the bHLH domain; that stretch reads ERRMANNARERLRVRDINEAFKELGRMCQLHLKSEKPQTKLLILHQAVAVILSL. Glycyl lysine isopeptide (Lys-Gly) (interchain with G-Cter in SUMO2) cross-links involve residues Lys633 and Lys677. The segment at 656 to 679 is class A specific domain; that stretch reads QQVRERNLNPKAACLKRREEEKVS. The segment at 674–706 is disordered; that stretch reads EEEKVSAASAEPPNTLPGAHPGLSESTNPMGHL. A compositionally biased stretch (polar residues) spans 697-706; that stretch reads SESTNPMGHL.

As to quaternary structure, efficient DNA binding requires dimerization with another bHLH protein. Forms homo- or heterooligomers with myogenin, E12 and ITF2 proteins and RUNX1T1. Interacts with PTF1A. Interacts with NEUROD2. Interacts with BHLHA9. Widely expressed.

It localises to the nucleus. Functionally, transcriptional regulator. Involved in the initiation of neuronal differentiation. Activates transcription by binding to the E box (5'-CANNTG-3'). May be involved in the functional network that regulates the development of the GnRH axis. This is Transcription factor 12 (Tcf12) from Mus musculus (Mouse).